The following is a 311-amino-acid chain: Probable 5-dehydro-4-deoxyglucarate dehydratase (311 aa).

It belongs to the DapA family.

It catalyses the reaction 5-dehydro-4-deoxy-D-glucarate + H(+) = 2,5-dioxopentanoate + CO2 + H2O. It functions in the pathway carbohydrate acid metabolism; D-glucarate degradation; 2,5-dioxopentanoate from D-glucarate: step 2/2. The protein is Probable 5-dehydro-4-deoxyglucarate dehydratase of Ralstonia nicotianae (strain ATCC BAA-1114 / GMI1000) (Ralstonia solanacearum).